The chain runs to 257 residues: MSIIVISGCATGIGAATRKVLEAAGHQIVGIDIRDAEVIADLSTAEGRKQAIADVLAKCSKGMDGLVLCAGLGPQTKVLGNVVSVNYFGATELMDAFLPALKKGHQPAAVVISSVASAHLAFDKNPLALALEAGEEAKARAIVEHAGEQGGNLAYAGSKNALTVAVRKRAAAWGEAGVRLNTIAPGATETPLLQAGLQDPRYGESIAKFVPPMGRRAEPSEMASVIAFLMSPAASYVHGAQIVIDGGIDAVMRPTQF.

Residues 8–13 (GCATGI), Asp32, 41–42 (DL), and Gly71 each bind NAD(+). Ser114 is a binding site for substrate. NAD(+)-binding residues include Tyr155 and Lys159. The Proton acceptor role is filled by Tyr155.

Belongs to the short-chain dehydrogenases/reductases (SDR) family. As to quaternary structure, homodimer.

It localises to the cytoplasm. It catalyses the reaction a 3alpha-hydroxysteroid + NADP(+) = a 3-oxosteroid + NADPH + H(+). The enzyme catalyses a 3alpha-hydroxysteroid + NAD(+) = a 3-oxosteroid + NADH + H(+). Its function is as follows. Catalyzes the reversible interconversion of hydroxy and oxo groups at position 3 of the steroid nucleus. Along with the 3 alpha-hydroxysteroid dehydrogenase and 3-oxo-reductase activities towards a variety of cis or trans fused A/B ring steroids, it also reduces several xenobiotic carbonyl compounds, including a metyrapone-based class of insecticides, to the respective alcohol metabolites. No detectable activity on testosterone, progesterone or 3-oxo-desogestrel. The polypeptide is 3-alpha-hydroxysteroid dehydrogenase/carbonyl reductase (hsdA) (Comamonas testosteroni (Pseudomonas testosteroni)).